The following is a 366-amino-acid chain: Anhydro-N-acetylmuramic acid kinase (366 aa).

Position 12-19 (12-19) interacts with ATP; sequence GTSLDGID.

The protein belongs to the anhydro-N-acetylmuramic acid kinase family.

The catalysed reaction is 1,6-anhydro-N-acetyl-beta-muramate + ATP + H2O = N-acetyl-D-muramate 6-phosphate + ADP + H(+). The protein operates within amino-sugar metabolism; 1,6-anhydro-N-acetylmuramate degradation. It functions in the pathway cell wall biogenesis; peptidoglycan recycling. Its function is as follows. Catalyzes the specific phosphorylation of 1,6-anhydro-N-acetylmuramic acid (anhMurNAc) with the simultaneous cleavage of the 1,6-anhydro ring, generating MurNAc-6-P. Is required for the utilization of anhMurNAc either imported from the medium or derived from its own cell wall murein, and thus plays a role in cell wall recycling. The sequence is that of Anhydro-N-acetylmuramic acid kinase from Nitrosospira multiformis (strain ATCC 25196 / NCIMB 11849 / C 71).